A 724-amino-acid polypeptide reads, in one-letter code: NAD(+) hydrolase SARM1 (724 aa).

The N-terminal 27 residues, 1 to 27, are a transit peptide targeting the mitochondrion; the sequence is MVLTLLFSAYKLCRFFIMSGPRPGADR. The stretch at 60–100 is one ARM 1 repeat; that stretch reads EVQGALERSLPELQQALSELKQASAAQAVGAGLAEVFQLVE. NAD(+) is bound by residues W103, R110, 149–157, and 190–193; these read EQILVAENR and HMFK. ARM repeat units lie at residues 114–153, 155–193, 196–235, 237–280, 281–314, 315–354, and 359–402; these read QGLC…QILV, ENRD…HMFK, EETC…NCAL, GGQT…LATN, KEVE…CLVD, ASDT…AEAA, and QGKT…EEVP. SAM domains are found at residues 412–476 and 486–548; these read WKEA…LKTF and NLAD…MLHS. Residues S548 and S558 each carry the phosphoserine modification. The TIR domain occupies 560 to 703; that stretch reads DTPDVFISYR…KIIRFLQGRP (144 aa). Residues 569–570 and E599 each bind NAD(+); that span reads RR. E642 is an active-site residue. Polar residues predominate over residues 703 to 717; that stretch reads PSQDSSAGSDTSLEG. Residues 703–724 are disordered; that stretch reads PSQDSSAGSDTSLEGATSMGLP.

This sequence belongs to the SARM1 family. As to quaternary structure, homooctamer; forms an octameric ring via SAM domains. Interacts with TICAM1/TRIF and thereby interferes with TICAM1/TRIF function. Interacts with MAPK10/JNK3 and SDC2 (via cytoplasmic domain). Phosphorylation at Ser-548 by JNK kinases (MAPK8, MAPK9 and /or MAPK10) enhance the NAD(+) hydrolase (NADase) activity. Phosphorylation at Ser-548 and subsequent activation takes place in response to oxidative stress conditions and inhibits mitochondrial respiration. Phosphorylation at Ser-548 increases in response to cerebral ischemia/reperfusion (I/R) injury.

Its subcellular location is the cytoplasm. It is found in the cell projection. The protein resides in the axon. The protein localises to the dendrite. It localises to the synapse. Its subcellular location is the mitochondrion. It catalyses the reaction NAD(+) + H2O = ADP-D-ribose + nicotinamide + H(+). The catalysed reaction is NAD(+) = cyclic ADP-beta-D-ribose + nicotinamide + H(+). The enzyme catalyses NADP(+) + H2O = ADP-D-ribose 2'-phosphate + nicotinamide + H(+). Autoinhibited: in the inactive state, the enzymatic TIR domain is held apart by the autoinhibiting ARM repeats. NAD(+)-binding to ARM repeats maintains an inactive state by promoting interaction between ARM repeats and the TIR domain, thereby facilitating inhibition of the enzymatic TIR domain. Following activation, possibly by nicotinamide mononucleotide (NMN), auto-inhibitory interactions are released, allowing self-association of the TIR domains and subsequent activation of the NAD(+) hydrolase (NADase) activity. Self-association of TIR domains is facilitated by the octamer of SAM domains. In terms of biological role, NAD(+) hydrolase, which plays a key role in axonal degeneration following injury by regulating NAD(+) metabolism. Acts as a negative regulator of MYD88- and TRIF-dependent toll-like receptor signaling pathway by promoting Wallerian degeneration, an injury-induced form of programmed subcellular death which involves degeneration of an axon distal to the injury site. Wallerian degeneration is triggered by NAD(+) depletion: in response to injury, SARM1 is activated and catalyzes cleavage of NAD(+) into ADP-D-ribose (ADPR), cyclic ADPR (cADPR) and nicotinamide; NAD(+) cleavage promoting cytoskeletal degradation and axon destruction. Also able to hydrolyze NADP(+), but not other NAD(+)-related molecules. Can activate neuronal cell death in response to stress. Regulates dendritic arborization through the MAPK4-JNK pathway. Involved in innate immune response: inhibits both TICAM1/TRIF- and MYD88-dependent activation of JUN/AP-1, TRIF-dependent activation of NF-kappa-B and IRF3, and the phosphorylation of MAPK14/p38. This Rattus norvegicus (Rat) protein is NAD(+) hydrolase SARM1.